The primary structure comprises 181 residues: Negative modulator of initiation of replication (181 aa).

3 interaction with DNA regions span residues 87-88 (AV), 116-120 (RTRVY), and 150-156 (NTNTGRK).

This sequence belongs to the SeqA family. As to quaternary structure, homodimer. Polymerizes to form helical filaments.

Its subcellular location is the cytoplasm. Negative regulator of replication initiation, which contributes to regulation of DNA replication and ensures that replication initiation occurs exactly once per chromosome per cell cycle. Binds to pairs of hemimethylated GATC sequences in the oriC region, thus preventing assembly of replication proteins and re-initiation at newly replicated origins. Repression is relieved when the region becomes fully methylated. The polypeptide is Negative modulator of initiation of replication (Shigella dysenteriae serotype 1 (strain Sd197)).